The sequence spans 76 residues: Glutathione S-transferase (76 aa).

Residues 1 to 40 (XVAFETVPVDLMKGEHKQPAYLALQPFGTVPAVVDGDYXL) form the GST N-terminal domain. The GST C-terminal domain maps to 41–76 (LSAVLDVYEAHLHGYLAGDFVSLADLAHLPFTDYLV).

The protein belongs to the GST superfamily. Theta family.

The protein resides in the cytoplasm. The enzyme catalyses RX + glutathione = an S-substituted glutathione + a halide anion + H(+). Functionally, conjugation of reduced glutathione to a wide number of exogenous and endogenous hydrophobic electrophiles. The polypeptide is Glutathione S-transferase (Brassica oleracea var. italica (Broccoli)).